The chain runs to 91 residues: uncharacterized protein (91 aa).

Residues Glu-71–Val-91 form a disordered region.

This is an uncharacterized protein from Archaeoglobus fulgidus (strain ATCC 49558 / DSM 4304 / JCM 9628 / NBRC 100126 / VC-16).